We begin with the raw amino-acid sequence, 333 residues long: Autoinducer 2 import system permease protein LsrC (333 aa).

A run of 9 helical transmembrane segments spans residues Leu-14–Leu-34, Leu-39–Leu-59, Ile-70–Val-90, Leu-93–Leu-113, Ile-115–Leu-135, Leu-157–Leu-177, Ile-206–Ala-226, Gly-252–Leu-272, and Leu-284–Asp-304.

It belongs to the binding-protein-dependent transport system permease family. AraH/RbsC subfamily. The complex is composed of two ATP-binding proteins (LsrA), two transmembrane proteins (LsrC and LsrD) and a solute-binding protein (LsrB).

It is found in the cell inner membrane. Its function is as follows. Part of the ABC transporter complex LsrABCD involved in autoinducer 2 (AI-2) import. Probably responsible for the translocation of the substrate across the membrane. The polypeptide is Autoinducer 2 import system permease protein LsrC (lsrC) (Photorhabdus laumondii subsp. laumondii (strain DSM 15139 / CIP 105565 / TT01) (Photorhabdus luminescens subsp. laumondii)).